The following is a 349-amino-acid chain: Protein-glutamate methylesterase/protein-glutamine glutaminase (349 aa).

In terms of domain architecture, Response regulatory spans 5-122; it reads RVLSVDDSAL…REGMLAYSEM (118 aa). Residue D56 is modified to 4-aspartylphosphate. The CheB-type methylesterase domain maps to 152-344; the sequence is LLSSEKLIAI…QQMLAKISAG (193 aa). Active-site residues include S164, H190, and D286.

Belongs to the CheB family. Post-translationally, phosphorylated by CheA. Phosphorylation of the N-terminal regulatory domain activates the methylesterase activity.

It localises to the cytoplasm. The enzyme catalyses [protein]-L-glutamate 5-O-methyl ester + H2O = L-glutamyl-[protein] + methanol + H(+). It catalyses the reaction L-glutaminyl-[protein] + H2O = L-glutamyl-[protein] + NH4(+). Its function is as follows. Involved in chemotaxis. Part of a chemotaxis signal transduction system that modulates chemotaxis in response to various stimuli. Catalyzes the demethylation of specific methylglutamate residues introduced into the chemoreceptors (methyl-accepting chemotaxis proteins or MCP) by CheR. Also mediates the irreversible deamidation of specific glutamine residues to glutamic acid. The polypeptide is Protein-glutamate methylesterase/protein-glutamine glutaminase (Salmonella choleraesuis (strain SC-B67)).